A 296-amino-acid polypeptide reads, in one-letter code: NAD kinase (296 aa).

D73 acts as the Proton acceptor in catalysis. Residues 73-74 (DG), K78, 151-152 (NE), R178, D180, and 191-196 (TAHAMS) each bind NAD(+).

This sequence belongs to the NAD kinase family. It depends on a divalent metal cation as a cofactor.

Its subcellular location is the cytoplasm. It catalyses the reaction NAD(+) + ATP = ADP + NADP(+) + H(+). Its function is as follows. Involved in the regulation of the intracellular balance of NAD and NADP, and is a key enzyme in the biosynthesis of NADP. Catalyzes specifically the phosphorylation on 2'-hydroxyl of the adenosine moiety of NAD to yield NADP. The chain is NAD kinase from Francisella tularensis subsp. mediasiatica (strain FSC147).